Reading from the N-terminus, the 509-residue chain is 2,3-bisphosphoglycerate-independent phosphoglycerate mutase (509 aa).

Aspartate 11 is a binding site for Mn(2+). Tyrosine 35 carries the post-translational modification Phosphotyrosine. Position 61 (serine 61) interacts with Mn(2+). The active-site Phosphoserine intermediate is the serine 61. Substrate contacts are provided by residues histidine 122, 152–153 (RD), arginine 184, arginine 190, 260–263 (RPDR), and lysine 335. Residues aspartate 402, histidine 406, aspartate 443, histidine 444, and histidine 461 each contribute to the Mn(2+) site.

It belongs to the BPG-independent phosphoglycerate mutase family. In terms of assembly, monomer. Mn(2+) is required as a cofactor.

The enzyme catalyses (2R)-2-phosphoglycerate = (2R)-3-phosphoglycerate. The protein operates within carbohydrate degradation; glycolysis; pyruvate from D-glyceraldehyde 3-phosphate: step 3/5. In terms of biological role, essential for rapid growth and for sporulation. Catalyzes the interconversion of 2-phosphoglycerate and 3-phosphoglycerate. This chain is 2,3-bisphosphoglycerate-independent phosphoglycerate mutase, found in Bacillus thuringiensis (strain Al Hakam).